The primary structure comprises 411 residues: LL-diaminopimelate aminotransferase 1 (411 aa).

Substrate is bound by residues Tyr-15 and Gly-42. Residues Tyr-72, 108–109 (SK), Tyr-132, Asn-187, Tyr-218, and 246–248 (SFS) contribute to the pyridoxal 5'-phosphate site. Substrate is bound by residues Lys-109, Tyr-132, and Asn-187. Lys-249 carries the post-translational modification N6-(pyridoxal phosphate)lysine. Arg-257 and Asn-292 together coordinate pyridoxal 5'-phosphate. The substrate site is built by Asn-292 and Arg-388.

This sequence belongs to the class-I pyridoxal-phosphate-dependent aminotransferase family. LL-diaminopimelate aminotransferase subfamily. Homodimer. Pyridoxal 5'-phosphate is required as a cofactor.

It carries out the reaction (2S,6S)-2,6-diaminopimelate + 2-oxoglutarate = (S)-2,3,4,5-tetrahydrodipicolinate + L-glutamate + H2O + H(+). Its pathway is amino-acid biosynthesis; L-lysine biosynthesis via DAP pathway; LL-2,6-diaminopimelate from (S)-tetrahydrodipicolinate (aminotransferase route): step 1/1. Involved in the synthesis of meso-diaminopimelate (m-DAP or DL-DAP), required for both lysine and peptidoglycan biosynthesis. Catalyzes the direct conversion of tetrahydrodipicolinate to LL-diaminopimelate. The polypeptide is LL-diaminopimelate aminotransferase 1 (Nostoc sp. (strain PCC 7120 / SAG 25.82 / UTEX 2576)).